A 962-amino-acid chain; its full sequence is Nonribosomal peptide synthetase atqA (962 aa).

Positions 34 to 462 (AANTTEGIIA…DGRTKEMVNI (429 aa)) are adenylation (A) domain. The region spanning 595 to 672 (SAEEATILSI…GLCQRIAATS (78 aa)) is the Carrier domain. S630 carries the post-translational modification O-(pantetheine 4'-phosphoryl)serine. A thioesterase (TE) domain region spans residues 694–951 (PLWLVHPGVG…KPEYVANFAK (258 aa)).

This sequence belongs to the NRP synthetase family.

It participates in secondary metabolite biosynthesis. Its function is as follows. Nonribosomal peptide synthetase; part of the gene cluster that mediates the biosynthesis of asterriquinone CT5, a natural product that displays potential biological activities including antitumor and insulin mimic activities. The nonribosomal peptide synthetase atqA is responsible for the production of the benzoquinone derivative didemethylasterriquinone D (DDAQ D), via condensation of 2 indole pyruvic acid (IPA) molecules. The symmetric connectivity of the 2 IPA molecules is thought to arise by head-to-tail dual Claisen condensations catalyzed by the TE domain of atqA. DDAQ D represents the core structure of asterriquinones and is further modified by yet unidentified tailoring enzymes to lead to the production of asterriquinone CT5. This is Nonribosomal peptide synthetase atqA from Aspergillus terreus (strain NIH 2624 / FGSC A1156).